Reading from the N-terminus, the 555-residue chain is Solute carrier family 22 member 2 (555 aa).

The Cytoplasmic segment spans residues 1 to 22; the sequence is MPTTVDDVLEHGGEFHFFQKQM. The helical transmembrane segment at 23 to 43 threads the bilayer; it reads FFLLALLSATFAPIYVGIVFL. Over 44 to 150 the chain is Extracellular; sequence GFTPDHRCRS…LVCANSWMLD (107 aa). An N-linked (GlcNAc...) asparagine glycan is attached at asparagine 72. The helical transmembrane segment at 151–171 threads the bilayer; that stretch reads LFQSSVNVGFFIGSMSIGYIA. The Cytoplasmic portion of the chain corresponds to 172 to 177; sequence DRFGRK. The chain crosses the membrane as a helical span at residues 178–198; it reads LCLLTTVLINAAAGVLMAISP. The Extracellular segment spans residues 199–208; sequence TYTWMLIFRL. The chain crosses the membrane as a helical span at residues 209–229; the sequence is IQGLVSKAGWLIGYILITEFV. Over 230–238 the chain is Cytoplasmic; it reads GRRYRRTVG. A helical transmembrane segment spans residues 239–259; sequence IFYQVAYTVGLLVLAGVAYAL. At 260 to 263 the chain is on the extracellular side; that stretch reads PHWR. The helical transmembrane segment at 264-284 threads the bilayer; that stretch reads WLQFTVSLPNFFFLLYYWCIP. The Proline-rich sequence signature appears at 284 to 288; that stretch reads PESPR. The Cytoplasmic portion of the chain corresponds to 285 to 348; the sequence is ESPRWLISQN…VRTPQIRKHT (64 aa). The helical transmembrane segment at 349–369 threads the bilayer; that stretch reads MILMYNWFTSSVLYQGLIMHM. Residues 370 to 375 are Extracellular-facing; that stretch reads GLAGDN. A helical membrane pass occupies residues 376 to 396; the sequence is IYLDFFYSALVEFPAAFMIIL. At 397–414 the chain is on the cytoplasmic side; it reads TIDRIGRRYPWAASNMVA. The helical transmembrane segment at 415–435 threads the bilayer; that stretch reads GAACLASVFIPGDLQWLKIII. The Extracellular segment spans residues 436-441; it reads SCLGRM. A helical transmembrane segment spans residues 442-462; the sequence is GITMAYEIVCLVNAELYPTFI. Over 463-464 the chain is Cytoplasmic; that stretch reads RN. A helical transmembrane segment spans residues 465–485; that stretch reads LGVHICSSMCDIGGIITPFLV. Over 486–494 the chain is Extracellular; it reads YRLTNIWLE. The helical transmembrane segment at 495–515 threads the bilayer; it reads LPLMVFGVLGLVAGGLVLLLP. Over 516–555 the chain is Cytoplasmic; sequence ETKGKALPETIEEAENMQRPRKNKEKMIYLQVQKLDIPLN.

It belongs to the major facilitator (TC 2.A.1) superfamily. Organic cation transporter (TC 2.A.1.19) family. In terms of processing, tyrosine phosphorylated by tyrosine-protein kinase YES1. In terms of tissue distribution, mainly expressed in kidney, in the cortex and medulla. Localized in testis, mostly to peritubular myoid cells and Leydig cells and also detected along the basal membrane of Sertoli cells. Expressed in brain, in neurons of the cerebral cortex and in various subcortical nuclei. In the brain, also detected in the dopaminergic regions of the substantia nigra. Expressed in tracheal and bronchial ciliated epithelium in the respiratory tract. Also detected in secretory phase endometrium, in scattered stromal cells. Expressed in spleen, placenta, small intestine and spinal cord. Weakly expressed in prostate, uterus and lung. As to expression, mainly expressed in kidney, bone marrow and testis. Expressed in colon, skeletal muscle, spinal cord, placenta and liver.

It is found in the basolateral cell membrane. Its subcellular location is the basal cell membrane. The protein resides in the apical cell membrane. It catalyses the reaction (R)-noradrenaline(out) = (R)-noradrenaline(in). It carries out the reaction (R)-adrenaline(out) = (R)-adrenaline(in). The catalysed reaction is serotonin(out) = serotonin(in). The enzyme catalyses dopamine(out) = dopamine(in). It catalyses the reaction histamine(out) = histamine(in). It carries out the reaction thiamine(in) = thiamine(out). The catalysed reaction is creatinine(in) = creatinine(out). The enzyme catalyses 1-methylnicotinamide(out) = 1-methylnicotinamide(in). It catalyses the reaction guanidine(out) = guanidine(in). It carries out the reaction choline(out) = choline(in). The catalysed reaction is agmatine(out) = agmatine(in). The enzyme catalyses putrescine(out) = putrescine(in). It catalyses the reaction spermidine(in) = spermidine(out). It carries out the reaction tyramine(in) = tyramine(out). The catalysed reaction is L-histidyl-L-proline diketopiperazine(in) = L-histidyl-L-proline diketopiperazine(out). The enzyme catalyses (R)-salsolinol(in) = (R)-salsolinol(out). It catalyses the reaction N-methyl-(R)-salsolinol(in) = N-methyl-(R)-salsolinol(out). It carries out the reaction acetylcholine(in) = acetylcholine(out). The catalysed reaction is prostaglandin F2alpha(out) = prostaglandin F2alpha(in). The enzyme catalyses prostaglandin E2(out) = prostaglandin E2(in). With respect to regulation, tyrosine phosphorylation of the transporter leads to activation of the transport activity. TEA uptake is activated by tyrosine phosphorylation. Inhibited by cGMP, most likely through a cGMP-binding protein that interacts with OCT2. Its function is as follows. Electrogenic voltage-dependent transporter that mediates the transport of a variety of organic cations such as endogenous bioactive amines, cationic drugs and xenobiotics. Functions as a Na(+)-independent, bidirectional uniporter. Cation cellular uptake or release is driven by the electrochemical potential, i.e. membrane potential and concentration gradient. However, may also engage electroneutral cation exchange when saturating concentrations of cation substrates are reached. Predominantly expressed at the basolateral membrane of hepatocytes and proximal tubules and involved in the uptake and disposition of cationic compounds by hepatic and renal clearance from the blood flow. Implicated in monoamine neurotransmitters uptake such as histamine, dopamine, adrenaline/epinephrine, noradrenaline/norepinephrine, serotonin and tyramine, thereby supporting a physiological role in the central nervous system by regulating interstitial concentrations of neurotransmitters. Also capable of transporting dopaminergic neuromodulators cyclo(his-pro), salsolinol and N-methyl-salsolinol, thereby involved in the maintenance of dopaminergic cell integrity in the central nervous system. Mediates the bidirectional transport of acetylcholine (ACh) at the apical membrane of ciliated cell in airway epithelium, thereby playing a role in luminal release of ACh from bronchial epithelium. Also transports guanidine and endogenous monoamines such as vitamin B1/thiamine, creatinine and N-1-methylnicotinamide (NMN). Mediates the uptake and efflux of quaternary ammonium compound choline. Mediates the bidirectional transport of polyamine agmatine and the uptake of polyamines putrescine and spermidine. Able to transport non-amine endogenous compounds such as prostaglandin E2 (PGE2) and prostaglandin F2-alpha (PGF2-alpha). Also involved in the uptake of xenobiotic 4-(4-(dimethylamino)styryl)-N-methylpyridinium (ASP). May contribute to regulate the transport of organic compounds in testis across the blood-testis-barrier. In terms of biological role, in contrast with isoform 1, not able to transport guanidine, creatinine, cimetidine and metformin. This is Solute carrier family 22 member 2 from Homo sapiens (Human).